Here is a 65-residue protein sequence, read N- to C-terminus: Antitoxin VapB32 (65 aa).

The tract at residues 46 to 65 (ALGGTDPQATAAPRRRTSPR) is disordered.

Antitoxin component of a type II toxin-antitoxin (TA) system. This is Antitoxin VapB32 (vapB32) from Mycobacterium tuberculosis (strain CDC 1551 / Oshkosh).